The sequence spans 599 residues: E3 ubiquitin-protein ligase Kcmf1 (599 aa).

A ZZ-type zinc finger spans residues 4–60 (HEGVSCDSCLKSNFNGRRYKCLICYDYDLCADCYEDGVTSTRHLVEHPMQCILTRSD). 8 residues coordinate Zn(2+): Cys-9, Cys-12, Cys-24, Cys-27, Cys-33, Cys-36, His-46, and His-50. The segment at 78–101 (FTCPYCKKMGFSDATLLEHVSAEH) adopts a C2H2-type zinc-finger fold. Disordered stretches follow at residues 155-193 (HGGG…PSGR), 229-253 (DRQQ…VSTS), 269-294 (GSGG…NLRT), 466-486 (VEQQ…VNQM), and 507-599 (NTTQ…PDTR). Composition is skewed to low complexity over residues 160–170 (RRIPGRTLGGP) and 180–192 (SSSS…SPSG). Gly residues predominate over residues 269-285 (GSGGSGAVGSGSGGGSG). The segment covering 513 to 532 (GTGGLGGAGATAAPGGGASG) has biased composition (gly residues). Positions 538–547 (TADRGIERRS) are enriched in basic and acidic residues. The span at 559-593 (SQQPQQQQQSTANPAASQQKYKQNASAATAAGNTN) shows a compositional bias: low complexity.

It belongs to the KCMF1 family. As to quaternary structure, interacts with poe.

It carries out the reaction S-ubiquitinyl-[E2 ubiquitin-conjugating enzyme]-L-cysteine + [acceptor protein]-L-lysine = [E2 ubiquitin-conjugating enzyme]-L-cysteine + N(6)-ubiquitinyl-[acceptor protein]-L-lysine.. In terms of biological role, has intrinsic E3 ubiquitin ligase activity and promotes ubiquitination. Involved in the negative regulation of the Ras/MAPK signaling pathway in the wing by acting with the E2 enzyme Unc6 and the putative E3 ligases poe and Ufd4 to mediate the ubiquitination and proteasomal degradation of rl/MAPK. The protein is E3 ubiquitin-protein ligase Kcmf1 of Drosophila melanogaster (Fruit fly).